Here is an 877-residue protein sequence, read N- to C-terminus: DNA mismatch repair protein MutS (877 aa).

630-637 lines the ATP pocket; sequence GPNMAGKS.

It belongs to the DNA mismatch repair MutS family.

Functionally, this protein is involved in the repair of mismatches in DNA. It is possible that it carries out the mismatch recognition step. This protein has a weak ATPase activity. This chain is DNA mismatch repair protein MutS, found in Jannaschia sp. (strain CCS1).